Here is a 642-residue protein sequence, read N- to C-terminus: Tigger transposable element derived 5 (642 aa).

The segment at 1–54 is disordered; that stretch reads MYPASPPAGPALHPVPHRARLPQPRCLAEPPRSPAPGPGSTARPPPPPAPGPRP. The segment covering 31–53 has biased composition (pro residues); it reads PRSPAPGPGSTARPPPPPAPGPR. Residues 57–108 form the HTH psq-type domain; it reads AVKMTFRKAYSIKDKLQAIERVKGGERQASVCRDFGVPGGTLRGWLKDEPKL. DNA-binding regions (H-T-H motif) lie at residues 84 to 104 and 155 to 188; these read QASVCRDFGVPGGTLRGWLKD and PVIQAQAEAFARQIYGPECTFKASHGWFWRWQKR. The 74-residue stretch at 122–195 folds into the HTH CENPB-type domain; that stretch reads QRKKMRLANE…QKRHGISSQR (74 aa). The tract at residues 202–238 is disordered; that stretch reads SPVAGPAPVKEEPAQSPGAVLVPDGAPATLPHSEGGY. In terms of domain architecture, DDE-1 spans 240-365; it reads DEQIYNANVT…CLQQKAVLLV (126 aa). Disordered stretches follow at residues 375-400 and 548-581; these read TSMPPLEESEETPRQCQPELLGSPEE and GCREEVAPAAPPSPASLPSSIGAGEEEEEATEQG.

Belongs to the tigger transposable element derived protein family.

Its subcellular location is the nucleus. In Mus musculus (Mouse), this protein is Tigger transposable element derived 5 (Tigd5).